The sequence spans 408 residues: Phosphopentomutase (408 aa).

Asp10, Asp307, His312, Asp348, His349, and His360 together coordinate Mn(2+).

This sequence belongs to the phosphopentomutase family. Mn(2+) serves as cofactor.

It localises to the cytoplasm. The catalysed reaction is 2-deoxy-alpha-D-ribose 1-phosphate = 2-deoxy-D-ribose 5-phosphate. It catalyses the reaction alpha-D-ribose 1-phosphate = D-ribose 5-phosphate. The protein operates within carbohydrate degradation; 2-deoxy-D-ribose 1-phosphate degradation; D-glyceraldehyde 3-phosphate and acetaldehyde from 2-deoxy-alpha-D-ribose 1-phosphate: step 1/2. Its function is as follows. Isomerase that catalyzes the conversion of deoxy-ribose 1-phosphate (dRib-1-P) and ribose 1-phosphate (Rib-1-P) to deoxy-ribose 5-phosphate (dRib-5-P) and ribose 5-phosphate (Rib-5-P), respectively. In Proteus mirabilis (strain HI4320), this protein is Phosphopentomutase.